The chain runs to 836 residues: DNA gyrase subunit A (836 aa).

The 465-residue stretch at 46-510 (LPDARDGLKP…ISEEIDDESL (465 aa)) folds into the Topo IIA-type catalytic domain. The O-(5'-phospho-DNA)-tyrosine intermediate role is filled by Tyr134. The short motif at 537 to 543 (QHRGGVG) is the GyrA-box element.

It belongs to the type II topoisomerase GyrA/ParC subunit family. In terms of assembly, heterotetramer, composed of two GyrA and two GyrB chains. In the heterotetramer, GyrA contains the active site tyrosine that forms a transient covalent intermediate with DNA, while GyrB binds cofactors and catalyzes ATP hydrolysis.

The protein localises to the cytoplasm. It catalyses the reaction ATP-dependent breakage, passage and rejoining of double-stranded DNA.. Its function is as follows. A type II topoisomerase that negatively supercoils closed circular double-stranded (ds) DNA in an ATP-dependent manner to modulate DNA topology and maintain chromosomes in an underwound state. Negative supercoiling favors strand separation, and DNA replication, transcription, recombination and repair, all of which involve strand separation. Also able to catalyze the interconversion of other topological isomers of dsDNA rings, including catenanes and knotted rings. Type II topoisomerases break and join 2 DNA strands simultaneously in an ATP-dependent manner. This is DNA gyrase subunit A from Mycoplasma genitalium (strain ATCC 33530 / DSM 19775 / NCTC 10195 / G37) (Mycoplasmoides genitalium).